We begin with the raw amino-acid sequence, 352 residues long: Photosystem II D2 protein (352 aa).

Position 2 is an N-acetylthreonine (T2). A Phosphothreonine modification is found at T2. Residues 40 to 60 (CAYFALGGWLTGTTFVSSWYT) traverse the membrane as a helical segment. H117 serves as a coordination point for chlorophyll a. Residues 124 to 140 (GFMLRQFEIARAVQIRP) traverse the membrane as a helical segment. Pheophytin a-binding residues include Q129 and N142. A helical transmembrane segment spans residues 152–165 (VFVSVFLIYPLGQS). H197 serves as a coordination point for chlorophyll a. A helical transmembrane segment spans residues 207 to 227 (AALLCAIHGATVENTLFEDGD). 2 residues coordinate a plastoquinone: H214 and F261. H214 is a Fe cation binding site. Residue H268 coordinates Fe cation. Residues 278-294 (GLWMSALGVVGLALNLR) form a helical membrane-spanning segment.

This sequence belongs to the reaction center PufL/M/PsbA/D family. PSII is composed of 1 copy each of membrane proteins PsbA, PsbB, PsbC, PsbD, PsbE, PsbF, PsbH, PsbI, PsbJ, PsbK, PsbL, PsbM, PsbT, PsbX, PsbY, PsbZ, Psb30/Ycf12, at least 3 peripheral proteins of the oxygen-evolving complex and a large number of cofactors. It forms dimeric complexes. Requires The D1/D2 heterodimer binds P680, chlorophylls that are the primary electron donor of PSII, and subsequent electron acceptors. It shares a non-heme iron and each subunit binds pheophytin, quinone, additional chlorophylls, carotenoids and lipids. There is also a Cl(-1) ion associated with D1 and D2, which is required for oxygen evolution. The PSII complex binds additional chlorophylls, carotenoids and specific lipids. as cofactor.

It localises to the plastid. The protein resides in the chloroplast thylakoid membrane. It catalyses the reaction 2 a plastoquinone + 4 hnu + 2 H2O = 2 a plastoquinol + O2. Photosystem II (PSII) is a light-driven water:plastoquinone oxidoreductase that uses light energy to abstract electrons from H(2)O, generating O(2) and a proton gradient subsequently used for ATP formation. It consists of a core antenna complex that captures photons, and an electron transfer chain that converts photonic excitation into a charge separation. The D1/D2 (PsbA/PsbD) reaction center heterodimer binds P680, the primary electron donor of PSII as well as several subsequent electron acceptors. D2 is needed for assembly of a stable PSII complex. The chain is Photosystem II D2 protein from Ostreococcus tauri.